The following is a 255-amino-acid chain: Ribose-5-phosphate isomerase (255 aa).

This sequence belongs to the ribose 5-phosphate isomerase family.

The protein resides in the cytoplasm. The catalysed reaction is aldehydo-D-ribose 5-phosphate = D-ribulose 5-phosphate. It participates in carbohydrate degradation; pentose phosphate pathway; D-ribose 5-phosphate from D-ribulose 5-phosphate (non-oxidative stage): step 1/1. The polypeptide is Ribose-5-phosphate isomerase (RKI1) (Eremothecium gossypii (strain ATCC 10895 / CBS 109.51 / FGSC 9923 / NRRL Y-1056) (Yeast)).